Reading from the N-terminus, the 300-residue chain is Ribosomal protein L11 methyltransferase (300 aa).

Residues threonine 152, glycine 173, aspartate 195, and asparagine 234 each contribute to the S-adenosyl-L-methionine site.

It belongs to the methyltransferase superfamily. PrmA family.

The protein resides in the cytoplasm. The catalysed reaction is L-lysyl-[protein] + 3 S-adenosyl-L-methionine = N(6),N(6),N(6)-trimethyl-L-lysyl-[protein] + 3 S-adenosyl-L-homocysteine + 3 H(+). Functionally, methylates ribosomal protein L11. In Burkholderia pseudomallei (strain K96243), this protein is Ribosomal protein L11 methyltransferase.